A 416-amino-acid polypeptide reads, in one-letter code: MDKFQIHGNGPLKGEIRVSGAKNAALPILCAGLLTADTVSLDNVPNLQDVRTTLKLLRQMGMQAELDGARVTLNGADVNVLEAPYELVKTMRASILVLGPLVARFGEARVSLPGGCGIGARPVDQHIKGLQAMGAEITIEHGFIHARAKRLKGARVVTDMITVTGTENLLMAATLAEGETVLENAAREPEVTDLAQLLVKMGAKIEGIGTDRLVVQGVERLHGASHSVIADRIEAGTFLCAAAATLGDLVLRGVQPDILDTVLDKLREAGAKLETGADWIRLAMPQRAKAVSFRTSEYPAFPTDMQAQFMALNAVAEGTARVTETIFENRFMHVQELNRLGADIAVEGNTAVVNGVPRLSGANVMATDLRASASLVIAGLVADGETVIDRIYHLDRGYDRMEDKLSAVGAKIRRIA.

Residue 22 to 23 (KN) coordinates phosphoenolpyruvate. R92 is a UDP-N-acetyl-alpha-D-glucosamine binding site. The active-site Proton donor is the C116. C116 carries the 2-(S-cysteinyl)pyruvic acid O-phosphothioketal modification. UDP-N-acetyl-alpha-D-glucosamine is bound by residues 121–125 (RPVDQ), D304, and I326.

It belongs to the EPSP synthase family. MurA subfamily.

It localises to the cytoplasm. It catalyses the reaction phosphoenolpyruvate + UDP-N-acetyl-alpha-D-glucosamine = UDP-N-acetyl-3-O-(1-carboxyvinyl)-alpha-D-glucosamine + phosphate. It functions in the pathway cell wall biogenesis; peptidoglycan biosynthesis. Functionally, cell wall formation. Adds enolpyruvyl to UDP-N-acetylglucosamine. This chain is UDP-N-acetylglucosamine 1-carboxyvinyltransferase, found in Cupriavidus necator (strain ATCC 17699 / DSM 428 / KCTC 22496 / NCIMB 10442 / H16 / Stanier 337) (Ralstonia eutropha).